The following is a 393-amino-acid chain: S-adenosylmethionine synthase (393 aa).

Position 16 (H16) interacts with ATP. D18 provides a ligand contact to Mg(2+). Residue E44 coordinates K(+). Residues E57 and Q100 each coordinate L-methionine. The flexible loop stretch occupies residues 100–110; it reads QSQDIAQGVDK. ATP-binding positions include 167 to 169, 238 to 239, D247, 253 to 254, A270, and K274; these read DAK, RF, and RK. D247 serves as a coordination point for L-methionine. Residue K278 participates in L-methionine binding.

The protein belongs to the AdoMet synthase family. In terms of assembly, homotetramer; dimer of dimers. Mg(2+) is required as a cofactor. It depends on K(+) as a cofactor.

It is found in the cytoplasm. The catalysed reaction is L-methionine + ATP + H2O = S-adenosyl-L-methionine + phosphate + diphosphate. It participates in amino-acid biosynthesis; S-adenosyl-L-methionine biosynthesis; S-adenosyl-L-methionine from L-methionine: step 1/1. Catalyzes the formation of S-adenosylmethionine (AdoMet) from methionine and ATP. The overall synthetic reaction is composed of two sequential steps, AdoMet formation and the subsequent tripolyphosphate hydrolysis which occurs prior to release of AdoMet from the enzyme. In Delftia acidovorans (strain DSM 14801 / SPH-1), this protein is S-adenosylmethionine synthase.